The sequence spans 344 residues: UDP-N-acetylenolpyruvoylglucosamine reductase (344 aa).

In terms of domain architecture, FAD-binding PCMH-type spans 15-185 (LPACANQIIE…ISVGLKLAKA (171 aa)). Arginine 161 is an active-site residue. The active-site Proton donor is the serine 231. The active site involves glutamate 327.

The protein belongs to the MurB family. FAD is required as a cofactor.

It is found in the cytoplasm. The catalysed reaction is UDP-N-acetyl-alpha-D-muramate + NADP(+) = UDP-N-acetyl-3-O-(1-carboxyvinyl)-alpha-D-glucosamine + NADPH + H(+). It functions in the pathway cell wall biogenesis; peptidoglycan biosynthesis. Cell wall formation. This Haemophilus ducreyi (strain 35000HP / ATCC 700724) protein is UDP-N-acetylenolpyruvoylglucosamine reductase.